The chain runs to 145 residues: UI (145 aa).

An N-terminal signal peptide occupies residues 1–22 (MKPVPLVLLITSVLLTTHIPLS). Val143 carries the valine amide modification.

This sequence belongs to the sauvagine/corticotropin-releasing factor/urotensin I family.

Its subcellular location is the secreted. Urotensin is found in the teleost caudal neurosecretory system. It has a suggested role in osmoregulation and as a corticotropin-releasing factor. The non-hormonal portion of this precursor may be a urotensin binding protein, urophysin. The protein is UI of Carassius auratus (Goldfish).